A 501-amino-acid polypeptide reads, in one-letter code: MAKDTALHLPLGLESVGWVLGLLTTSILYLFLSPRSQIPRPPVVNKYWWDFFQIKAKRDFDARAEDLIKLGLSKARAKNTERRFGPRLVLSDKLADAVGMDNRFDQNKGIAPVNLVELRGFESMFSAALHDSVPRPATSATSKRLVHLTQPFSEETTDFLQREWTESPDWHEIVVYPVMSRLTAQVLSRAFVGPKLCRDARWLDIATTYVSHRMTAAVAVQKWGTVLQPIVHWFLPSCRRLRAHIQRARELIQPELDRIKENPLEDETFTSLAWIHGFAQGYIYDAGLAQLRLTAVANHTTSDMVTKILIRICENPELIQPLRDEAIEAVRGGRLRVAALQKMFLMESVMKESQRLEPFFLLSMFRYATETVILPGGTAIPQGTLLTVANPSRLDPAIYPDPEKFDGYRFVRMREDPENAHLAPFTKTNPTNLNFGHGKQACPGRFIAVNQIKIALCHILLKYDVELVEECPSQLIRSGLLTVRNPGAKIRVRRRQEEVSL.

The chain crosses the membrane as a helical span at residues 11-31; it reads LGLESVGWVLGLLTTSILYLF. Asparagine 298 is a glycosylation site (N-linked (GlcNAc...) asparagine). Cysteine 442 serves as a coordination point for heme.

It belongs to the cytochrome P450 family. Requires heme as cofactor.

It localises to the membrane. Its pathway is alkaloid biosynthesis. Its function is as follows. Cytochrome P450 monooxygenase; part of the gene cluster that mediates the biosynthesis of notoamide, a fungal indole alkaloid that belongs to a family of natural products containing a characteristic bicyclo[2.2.2]diazaoctane core. The first step of notoamide biosynthesis involves coupling of L-proline and L-tryptophan by the bimodular NRPS notE, to produce cyclo-L-tryptophan-L-proline called brevianamide F. The reverse prenyltransferase notF then acts as a deoxybrevianamide E synthase and converts brevianamide F to deoxybrevianamide E via reverse prenylation at C-2 of the indole ring leading to the bicyclo[2.2.2]diazaoctane core. Deoxybrevianamide E is further hydroxylated at C-6 of the indole ring, likely catalyzed by the cytochrome P450 monooxygenase notG, to yield 6-hydroxy-deoxybrevianamide E. 6-hydroxy-deoxybrevianamide E is a specific substrate of the prenyltransferase notC for normal prenylation at C-7 to produce 6-hydroxy-7-prenyl-deoxybrevianamide, also called notoamide S. As the proposed pivotal branching point in notoamide biosynthesis, notoamide S can be diverted to notoamide E through an oxidative pyran ring closure putatively catalyzed by either notH cytochrome P450 monooxygenase or the notD FAD-linked oxidoreductase. This step would be followed by an indole 2,3-epoxidation-initiated pinacol-like rearrangement catalyzed by the notB FAD-dependent monooxygenase leading to the formation of notoamide C and notoamide D. On the other hand notoamide S is converted to notoamide T by notH (or notD), a bifunctional oxidase that also functions as the intramolecular Diels-Alderase responsible for generation of (+)-notoamide T. To generate antipodal (-)-notoaminide T, notH' (or notD') in Aspergillus versicolor is expected to catalyze a Diels-Alder reaction leading to the opposite stereochemistry. The remaining oxidoreductase notD (or notH) likely catalyzes the oxidative pyran ring formation to yield (+)-stephacidin A. The FAD-dependent monooxygenase notI is highly similar to notB and is predicted to catalyze a similar conversion from (+)-stephacidin A to (-)-notoamide B via the 2,3-epoxidation of (+)-stephacidin A followed by a pinacol-type rearrangement. Finally, it remains unclear which enzyme could be responsible for the final hydroxylation steps leading to notoamide A and sclerotiamide. The chain is Cytochrome P450 monooxygenase notH from Aspergillus sp. (strain MF297-2).